The following is a 138-amino-acid chain: Large ribosomal subunit protein bL19 (138 aa).

It belongs to the bacterial ribosomal protein bL19 family.

In terms of biological role, this protein is located at the 30S-50S ribosomal subunit interface and may play a role in the structure and function of the aminoacyl-tRNA binding site. The chain is Large ribosomal subunit protein bL19 from Rickettsia akari (strain Hartford).